We begin with the raw amino-acid sequence, 129 residues long: Small ribosomal subunit protein uS11 (129 aa).

It belongs to the universal ribosomal protein uS11 family. Part of the 30S ribosomal subunit. Interacts with proteins S7 and S18. Binds to IF-3.

Located on the platform of the 30S subunit, it bridges several disparate RNA helices of the 16S rRNA. Forms part of the Shine-Dalgarno cleft in the 70S ribosome. This Idiomarina loihiensis (strain ATCC BAA-735 / DSM 15497 / L2-TR) protein is Small ribosomal subunit protein uS11.